The primary structure comprises 502 residues: MGSPFLNHRLRSELGDLALLHLRRDQTIPTILKLEDDENQGYKEGKVTNTRFGSFPHSTLIDQPWGSQIVASVVDTGSRGRKNQSSKKRKADDLDTPTSNKDEAQSSPGTPRAAASGFLHLLYPTPELWTASLPHRTQVVYTPDYSYILHRLCVRPGSTIIEAGAGSGSFTHASVRAVFNGYPSEAPAAKKRRLGKVCSFEFHAQRAQRIREEIHDHGLDALVEVTHRDVYEDGFLLGDPKTGKSPKANAIFLDLPAPWLALKHLVRRPPSGAESPLDPSSPVYICTFSPCIEQVQRTITTLREYSWLSISMVEVNHHRIDVKRERTGLDCEGVRGATVFPKSVDEAVAKMRAVEEHSRRFRESLLQESDDEGTASDKPAATKSGKTEVEEKSLQDISQHSDTTAAPSSTPSYDLGRLVHRTEPDLKTHTSYLVFAILPREWTEEDEQRCRQAWPAQKTGGSPDAGKPKGKKQLKREAKEKEVQEEAQKSEDVPARPQETQS.

Residues 76 to 112 (TGSRGRKNQSSKKRKADDLDTPTSNKDEAQSSPGTPR) form a disordered region. The span at 79–89 (RGRKNQSSKKR) shows a compositional bias: basic residues. S-adenosyl-L-methionine contacts are provided by residues 167 to 169 (SGS), E201, R206, 229 to 230 (DV), and D254. Disordered stretches follow at residues 365 to 417 (LLQE…DLGR) and 444 to 502 (EEDE…ETQS). Positions 385 to 394 (GKTEVEEKSL) are enriched in basic and acidic residues. Residues 403–412 (TTAAPSSTPS) show a composition bias toward low complexity. A compositionally biased stretch (basic and acidic residues) spans 475–494 (KREAKEKEVQEEAQKSEDVP).

This sequence belongs to the class I-like SAM-binding methyltransferase superfamily. TRM61 family. Heterotetramer; composed of two copies of TRM6 and two copies of TRM61.

The protein resides in the nucleus. It catalyses the reaction adenosine(58) in tRNA + S-adenosyl-L-methionine = N(1)-methyladenosine(58) in tRNA + S-adenosyl-L-homocysteine + H(+). Catalytic subunit of tRNA (adenine-N(1)-)-methyltransferase, which catalyzes the formation of N(1)-methyladenine at position 58 (m1A58) in initiator methionyl-tRNA. This chain is tRNA (adenine(58)-N(1))-methyltransferase catalytic subunit trm61 (trm61), found in Aspergillus fumigatus (strain ATCC MYA-4609 / CBS 101355 / FGSC A1100 / Af293) (Neosartorya fumigata).